The following is a 292-amino-acid chain: Bifunctional protein FolD (292 aa).

NADP(+)-binding positions include 169–171, threonine 196, and valine 237; that span reads GRG.

It belongs to the tetrahydrofolate dehydrogenase/cyclohydrolase family. Homodimer.

It catalyses the reaction (6R)-5,10-methylene-5,6,7,8-tetrahydrofolate + NADP(+) = (6R)-5,10-methenyltetrahydrofolate + NADPH. The catalysed reaction is (6R)-5,10-methenyltetrahydrofolate + H2O = (6R)-10-formyltetrahydrofolate + H(+). It participates in one-carbon metabolism; tetrahydrofolate interconversion. Its function is as follows. Catalyzes the oxidation of 5,10-methylenetetrahydrofolate to 5,10-methenyltetrahydrofolate and then the hydrolysis of 5,10-methenyltetrahydrofolate to 10-formyltetrahydrofolate. This is Bifunctional protein FolD from Bifidobacterium longum (strain NCC 2705).